We begin with the raw amino-acid sequence, 388 residues long: Succinate--CoA ligase [ADP-forming] subunit beta (388 aa).

Residues 9–244 (KQLFREYGLP…TTQDDEREMH (236 aa)) form the ATP-grasp domain. Residues Lys46, 53–55 (GRG), Glu99, Ser102, and Glu107 contribute to the ATP site. Mg(2+)-binding residues include Asn199 and Asp213. Substrate is bound by residues Asn264 and 321-323 (GIV).

The protein belongs to the succinate/malate CoA ligase beta subunit family. In terms of assembly, heterotetramer of two alpha and two beta subunits. The cofactor is Mg(2+).

The enzyme catalyses succinate + ATP + CoA = succinyl-CoA + ADP + phosphate. The catalysed reaction is GTP + succinate + CoA = succinyl-CoA + GDP + phosphate. The protein operates within carbohydrate metabolism; tricarboxylic acid cycle; succinate from succinyl-CoA (ligase route): step 1/1. In terms of biological role, succinyl-CoA synthetase functions in the citric acid cycle (TCA), coupling the hydrolysis of succinyl-CoA to the synthesis of either ATP or GTP and thus represents the only step of substrate-level phosphorylation in the TCA. The beta subunit provides nucleotide specificity of the enzyme and binds the substrate succinate, while the binding sites for coenzyme A and phosphate are found in the alpha subunit. This chain is Succinate--CoA ligase [ADP-forming] subunit beta, found in Psychromonas ingrahamii (strain DSM 17664 / CCUG 51855 / 37).